Consider the following 577-residue polypeptide: Probable cytochrome c biosynthesis protein (577 aa).

This sequence belongs to the CcmF/CycK/Ccl1/NrfE/CcsA family.

The protein localises to the mitochondrion. In terms of biological role, could be involved in assembly and maturation of cytochromes c. May play a role in guidance of apocytochromes and heme groups for the covalent linkage introduced by the cytochrome-c-heme lyase. The polypeptide is Probable cytochrome c biosynthesis protein (Oenothera berteroana (Bertero's evening primrose)).